Reading from the N-terminus, the 93-residue chain is Phosphoribosyl-ATP pyrophosphatase (93 aa).

It belongs to the PRA-PH family.

The protein localises to the cytoplasm. It catalyses the reaction 1-(5-phospho-beta-D-ribosyl)-ATP + H2O = 1-(5-phospho-beta-D-ribosyl)-5'-AMP + diphosphate + H(+). Its pathway is amino-acid biosynthesis; L-histidine biosynthesis; L-histidine from 5-phospho-alpha-D-ribose 1-diphosphate: step 2/9. In Mycolicibacterium smegmatis (strain ATCC 700084 / mc(2)155) (Mycobacterium smegmatis), this protein is Phosphoribosyl-ATP pyrophosphatase.